Here is a 607-residue protein sequence, read N- to C-terminus: Elongation factor 4 (607 aa).

Residues 11 to 193 (GKIRNFSIIA…QIVEKVPAPT (183 aa)) form the tr-type G domain. GTP-binding positions include 23–28 (DHGKST) and 140–143 (NKID).

Belongs to the TRAFAC class translation factor GTPase superfamily. Classic translation factor GTPase family. LepA subfamily.

The protein localises to the cell membrane. The catalysed reaction is GTP + H2O = GDP + phosphate + H(+). In terms of biological role, required for accurate and efficient protein synthesis under certain stress conditions. May act as a fidelity factor of the translation reaction, by catalyzing a one-codon backward translocation of tRNAs on improperly translocated ribosomes. Back-translocation proceeds from a post-translocation (POST) complex to a pre-translocation (PRE) complex, thus giving elongation factor G a second chance to translocate the tRNAs correctly. Binds to ribosomes in a GTP-dependent manner. The protein is Elongation factor 4 of Streptococcus pneumoniae (strain JJA).